We begin with the raw amino-acid sequence, 859 residues long: Rod cGMP-specific 3',5'-cyclic phosphodiesterase subunit alpha (859 aa).

At glycine 2 the chain carries N-acetylglycine. GAF domains lie at 73 to 222 (QAEK…NLIM) and 254 to 431 (DIER…GWSV). The PDEase domain maps to 483–816 (EEEELAEILQ…KEWKALADEY (334 aa)). Histidine 559 acts as the Proton donor in catalysis. The a divalent metal cation site is built by histidine 563, histidine 599, aspartate 600, and aspartate 720. The disordered stretch occupies residues 823–859 (LEEEKQKQQAAKQAASGNQPGGNPLQGAPASKSCCIQ). Cysteine 856 is subject to Cysteine methyl ester. Cysteine 856 carries S-farnesyl cysteine lipidation. The propeptide at 857–859 (CIQ) is removed in mature form.

It belongs to the cyclic nucleotide phosphodiesterase family. In terms of assembly, oligomer composed of two catalytic chains (alpha and beta), an inhibitory chain (gamma) and the delta chain. The cofactor is a divalent metal cation.

The protein localises to the cell membrane. It localises to the cell projection. It is found in the cilium. Its subcellular location is the photoreceptor outer segment. It carries out the reaction 3',5'-cyclic GMP + H2O = GMP + H(+). In terms of biological role, rod-specific cGMP phosphodiesterase that catalyzes the hydrolysis of 3',5'-cyclic GMP. This protein participates in processes of transmission and amplification of the visual signal. The protein is Rod cGMP-specific 3',5'-cyclic phosphodiesterase subunit alpha of Mus musculus (Mouse).